Consider the following 1188-residue polypeptide: DNA-directed RNA polymerase subunit beta (1188 aa).

Residues 1149–1188 form a disordered region; the sequence is ELRDLDEGEDDDVMHVDDLEKAREKQAQETPEVSENSEEK. Basic and acidic residues predominate over residues 1161–1175; it reads VMHVDDLEKAREKQA.

This sequence belongs to the RNA polymerase beta chain family. The RNAP catalytic core consists of 2 alpha, 1 beta, 1 beta' and 1 omega subunit. When a sigma factor is associated with the core the holoenzyme is formed, which can initiate transcription.

It carries out the reaction RNA(n) + a ribonucleoside 5'-triphosphate = RNA(n+1) + diphosphate. Its function is as follows. DNA-dependent RNA polymerase catalyzes the transcription of DNA into RNA using the four ribonucleoside triphosphates as substrates. This Streptococcus uberis (strain ATCC BAA-854 / 0140J) protein is DNA-directed RNA polymerase subunit beta.